The following is a 454-amino-acid chain: Bifunctional protein GlmU (454 aa).

Positions 1–228 are pyrophosphorylase; the sequence is MSLKVIILAA…EMEVLGVNNK (228 aa). UDP-N-acetyl-alpha-D-glucosamine-binding positions include 8–11, K22, Q73, 78–79, 100–102, G138, E153, N168, and N226; these read LAAG, GT, and YGD. D102 is a binding site for Mg(2+). A Mg(2+)-binding site is contributed by N226. Residues 229–249 are linker; it reads SQLQSLERQYQAQLAEELMEQ. Positions 250-454 are N-acetyltransferase; the sequence is GVTVLDASRI…IKGWQKPTKN (205 aa). The UDP-N-acetyl-alpha-D-glucosamine site is built by R332 and K350. The Proton acceptor role is filled by H362. UDP-N-acetyl-alpha-D-glucosamine-binding residues include Y365 and N376. Acetyl-CoA is bound by residues A379, 385–386, S404, A422, and R439; that span reads NY.

The protein in the N-terminal section; belongs to the N-acetylglucosamine-1-phosphate uridyltransferase family. This sequence in the C-terminal section; belongs to the transferase hexapeptide repeat family. As to quaternary structure, homotrimer. Requires Mg(2+) as cofactor.

The protein localises to the cytoplasm. It carries out the reaction alpha-D-glucosamine 1-phosphate + acetyl-CoA = N-acetyl-alpha-D-glucosamine 1-phosphate + CoA + H(+). It catalyses the reaction N-acetyl-alpha-D-glucosamine 1-phosphate + UTP + H(+) = UDP-N-acetyl-alpha-D-glucosamine + diphosphate. The protein operates within nucleotide-sugar biosynthesis; UDP-N-acetyl-alpha-D-glucosamine biosynthesis; N-acetyl-alpha-D-glucosamine 1-phosphate from alpha-D-glucosamine 6-phosphate (route II): step 2/2. Its pathway is nucleotide-sugar biosynthesis; UDP-N-acetyl-alpha-D-glucosamine biosynthesis; UDP-N-acetyl-alpha-D-glucosamine from N-acetyl-alpha-D-glucosamine 1-phosphate: step 1/1. It functions in the pathway bacterial outer membrane biogenesis; LPS lipid A biosynthesis. Its function is as follows. Catalyzes the last two sequential reactions in the de novo biosynthetic pathway for UDP-N-acetylglucosamine (UDP-GlcNAc). The C-terminal domain catalyzes the transfer of acetyl group from acetyl coenzyme A to glucosamine-1-phosphate (GlcN-1-P) to produce N-acetylglucosamine-1-phosphate (GlcNAc-1-P), which is converted into UDP-GlcNAc by the transfer of uridine 5-monophosphate (from uridine 5-triphosphate), a reaction catalyzed by the N-terminal domain. This is Bifunctional protein GlmU from Hydrogenovibrio crunogenus (strain DSM 25203 / XCL-2) (Thiomicrospira crunogena).